The following is a 147-amino-acid chain: Nucleoside diphosphate kinase (147 aa).

Residues Lys-9, Phe-57, Arg-85, Thr-91, Arg-102, and Asn-112 each contribute to the ATP site. His-115 functions as the Pros-phosphohistidine intermediate in the catalytic mechanism.

This sequence belongs to the NDK family. In terms of assembly, homotetramer. Mg(2+) is required as a cofactor.

It localises to the cytoplasm. The catalysed reaction is a 2'-deoxyribonucleoside 5'-diphosphate + ATP = a 2'-deoxyribonucleoside 5'-triphosphate + ADP. It carries out the reaction a ribonucleoside 5'-diphosphate + ATP = a ribonucleoside 5'-triphosphate + ADP. Its function is as follows. Major role in the synthesis of nucleoside triphosphates other than ATP. The ATP gamma phosphate is transferred to the NDP beta phosphate via a ping-pong mechanism, using a phosphorylated active-site intermediate. This chain is Nucleoside diphosphate kinase, found in Thermosipho melanesiensis (strain DSM 12029 / CIP 104789 / BI429).